The primary structure comprises 343 residues: Glyceraldehyde-3-phosphate dehydrogenase (343 aa).

Residues 13–14 and Gly111 each bind NAD(+); that span reads TI. 140-142 contributes to the D-glyceraldehyde 3-phosphate binding site; that stretch reads SCN. The Nucleophile role is filled by Cys141. Arg169 serves as a coordination point for NAD(+). Position 195 to 196 (195 to 196) interacts with D-glyceraldehyde 3-phosphate; that stretch reads HA. Residue Gln303 coordinates NAD(+).

It belongs to the glyceraldehyde-3-phosphate dehydrogenase family. Homotetramer.

The protein resides in the cytoplasm. It carries out the reaction D-glyceraldehyde 3-phosphate + phosphate + NADP(+) = (2R)-3-phospho-glyceroyl phosphate + NADPH + H(+). The enzyme catalyses D-glyceraldehyde 3-phosphate + phosphate + NAD(+) = (2R)-3-phospho-glyceroyl phosphate + NADH + H(+). The protein operates within carbohydrate degradation; glycolysis; pyruvate from D-glyceraldehyde 3-phosphate: step 1/5. In Sulfurisphaera tokodaii (strain DSM 16993 / JCM 10545 / NBRC 100140 / 7) (Sulfolobus tokodaii), this protein is Glyceraldehyde-3-phosphate dehydrogenase.